Reading from the N-terminus, the 332-residue chain is Nucleoid-associated protein VVA0877 (332 aa).

This sequence belongs to the YejK family.

The protein localises to the cytoplasm. The protein resides in the nucleoid. The chain is Nucleoid-associated protein VVA0877 from Vibrio vulnificus (strain YJ016).